A 116-amino-acid chain; its full sequence is Large ribosomal subunit protein uL18 (116 aa).

This sequence belongs to the universal ribosomal protein uL18 family. As to quaternary structure, part of the 50S ribosomal subunit; part of the 5S rRNA/L5/L18/L25 subcomplex. Contacts the 5S and 23S rRNAs.

Functionally, this is one of the proteins that bind and probably mediate the attachment of the 5S RNA into the large ribosomal subunit, where it forms part of the central protuberance. The sequence is that of Large ribosomal subunit protein uL18 from Saccharophagus degradans (strain 2-40 / ATCC 43961 / DSM 17024).